The following is a 593-amino-acid chain: METGNVVNAQPELSGIIDRSKSYMYEQLWKLCAGPLCDIPKLGEKVYYFPQGNIELVEASTREELNELQPICDLPSKLQCRVIAIHLKVENNSDETYAKITLMPDTTQVVIPTQNENQFRPLVNSFTKVLTASDISANGVFSVPKKHAIECLPPLDMSQPLPAQELLAIDLHGNQWSFRHSYRGTPQRHLLTTGWNEFTTSKKLVKGDVIVFVRGETGELRVGIRRARHQQGNIPSSIVSIDCMRHGVIASAKHAFDNQCMFIVVYKPRSSQFIVSYDKFLDAVNNKFNVGSRFTMRFEGDDLSERRYFGTIIGVSNFSPHWKCSDWRSLEVQWDEFASFLRPNKVSPWEIEHLMPALNVPRSSFLKNKRLREVNEFGSSSSHLLPPILTQGQEIGQLSVASPMNISLLYRETTEDAMNPSRLLMSYPVQPMPKRNYNNQMVTQIEENITTKAGTNFRLFGVSLATPPVIKDPIEQIGSDISKLTEGKKFGQSQTLRSPTKIQSKQFSSTRTCTKVQMQGVTIGRAVDLSVLNGYDQLILELEKLFDLKGQLQTRNQWKIIFTGSDEDEMLVGDDPWPEFCNMVKRIYIQKRR.

The TF-B3 DNA-binding region spans 126 to 228 (FTKVLTASDI…ELRVGIRRAR (103 aa)). Residues 511–592 (RTCTKVQMQG…MVKRIYIQKR (82 aa)) form the PB1 domain.

Belongs to the ARF family. In terms of assembly, homodimers and heterodimers.

The protein localises to the nucleus. Its function is as follows. Auxin response factors (ARFs) are transcriptional factors that bind specifically to the DNA sequence 5'-TGTCTC-3' found in the auxin-responsive promoter elements (AuxREs). Could act as transcriptional activator or repressor. Formation of heterodimers with Aux/IAA proteins may alter their ability to modulate early auxin response genes expression. This chain is Putative auxin response factor 15 (ARF15), found in Arabidopsis thaliana (Mouse-ear cress).